Consider the following 132-residue polypeptide: MLTDRKFVVKTTLDLQDDISSVCCSPCNRYIIIASGNNCQHIYYLCATNLEILFKFKAHDDSIVHLVSTLDGKYIVSSGLDGLIKIWNFKTANLANVLPKRDVRRMKFDVMENMWLDIAESIDISFDEIWQS.

WD repeat units follow at residues 14 to 53 (DLQD…LEIL) and 58 to 97 (AHDD…LANV).

This is an uncharacterized protein from Acanthamoeba polyphaga (Amoeba).